A 368-amino-acid polypeptide reads, in one-letter code: Protein ALTERED XYLOGLUCAN 9 (368 aa).

Over 1 to 32 (MLGAIHLGVLAACFVLFVPMAMAGWHLSRNKM) the chain is Cytoplasmic. Residues 33 to 53 (LFFSGALFISLAVCVHLTPYF) form a helical membrane-spanning segment. At 54–368 (PSVSDIVASV…ALLIESHQSL (315 aa)) the chain is on the lumenal side. N99, N137, and N235 each carry an N-linked (GlcNAc...) asparagine glycan.

Its subcellular location is the golgi apparatus membrane. Component of the plant cell wall polysaccharide acetylation pathway. Does not directly catalyze O-acetylation of xyloglucan but exhibits weak acetylesterase activity in vitro. The polypeptide is Protein ALTERED XYLOGLUCAN 9 (Arabidopsis thaliana (Mouse-ear cress)).